A 634-amino-acid chain; its full sequence is Chaperone protein HtpG (634 aa).

The interval 1–345 (MEHQQNHTFS…SNDLPLNVSR (345 aa)) is a; substrate-binding. The segment at 346–562 (EILQDTRVTA…NDDMSTQMAK (217 aa)) is b. Residues 563–634 (LMAQMGQPVP…VGRINKLLLA (72 aa)) are c.

It belongs to the heat shock protein 90 family. In terms of assembly, homodimer.

It localises to the cytoplasm. Molecular chaperone. Has ATPase activity. The protein is Chaperone protein HtpG of Psychromonas ingrahamii (strain DSM 17664 / CCUG 51855 / 37).